Reading from the N-terminus, the 147-residue chain is Large ribosomal subunit protein uL15 (147 aa).

The disordered stretch occupies residues 1–55 (MKLHEIAPQPGSTKRRRRVGRGVSAGQGASCGLGMRGQKSRSGTGTRPGFEGGQM). The segment covering 23 to 35 (VSAGQGASCGLGM) has biased composition (gly residues).

It belongs to the universal ribosomal protein uL15 family. In terms of assembly, part of the 50S ribosomal subunit.

Functionally, binds to the 23S rRNA. The polypeptide is Large ribosomal subunit protein uL15 (Microcystis aeruginosa (strain NIES-843 / IAM M-2473)).